The primary structure comprises 413 residues: Mitochondrial carrier protein MTM1 (413 aa).

Solcar repeat units lie at residues 59-193, 205-305, and 318-406; these read IGFT…FRNR, MTFC…IKKR, and GVFG…VKYV. 6 helical membrane passes run 65–85, 170–190, 204–226, 284–304, 316–336, and 378–399; these read VFSAAGAAVLSAVTLNPLDVV, NAGLALAVPMVGIYLPFYDMF, AMTFCVPTVAGSLARSLACTVCY, QLARDVPFSAICWSTLEPIKK, LVGVFGATFSAGFIAGSIAAA, and LFMGMGPRVARAGPSVGIVVSF.

Belongs to the mitochondrial carrier (TC 2.A.29) family. Ubiquitous.

It is found in the mitochondrion inner membrane. Functionally, involved in the mitochondrial activation of MSD1 by specifically facilitating insertion of the essential manganese cofactor. Has the ability to activate iron regulon in an iron-dependent manner. This is Mitochondrial carrier protein MTM1 (MTM1) from Arabidopsis thaliana (Mouse-ear cress).